The chain runs to 96 residues: Growth-regulated alpha protein (96 aa).

The signal sequence occupies residues 1-24 (MIPATRSLLCAALLLLATSRLATG). Cystine bridges form between Cys-33/Cys-59 and Cys-35/Cys-75.

It belongs to the intercrine alpha (chemokine CxC) family. The N-terminal processed form KC(5-72) is produced by proteolytic cleavage after secretion from bone marrow stromal cells.

Its subcellular location is the secreted. Functionally, has chemotactic activity for neutrophils. Contributes to neutrophil activation during inflammation. Hematoregulatory chemokine, which, in vitro, suppresses hematopoietic progenitor cell proliferation. KC(5-72) shows a highly enhanced hematopoietic activity. This chain is Growth-regulated alpha protein (Cxcl1), found in Mus musculus (Mouse).